The primary structure comprises 258 residues: Imidazole glycerol phosphate synthase subunit HisF (258 aa).

Residues D12 and D131 contribute to the active site.

The protein belongs to the HisA/HisF family. As to quaternary structure, heterodimer of HisH and HisF.

Its subcellular location is the cytoplasm. The enzyme catalyses 5-[(5-phospho-1-deoxy-D-ribulos-1-ylimino)methylamino]-1-(5-phospho-beta-D-ribosyl)imidazole-4-carboxamide + L-glutamine = D-erythro-1-(imidazol-4-yl)glycerol 3-phosphate + 5-amino-1-(5-phospho-beta-D-ribosyl)imidazole-4-carboxamide + L-glutamate + H(+). Its pathway is amino-acid biosynthesis; L-histidine biosynthesis; L-histidine from 5-phospho-alpha-D-ribose 1-diphosphate: step 5/9. Its function is as follows. IGPS catalyzes the conversion of PRFAR and glutamine to IGP, AICAR and glutamate. The HisF subunit catalyzes the cyclization activity that produces IGP and AICAR from PRFAR using the ammonia provided by the HisH subunit. The polypeptide is Imidazole glycerol phosphate synthase subunit HisF (Paenarthrobacter aurescens (strain TC1)).